Here is a 451-residue protein sequence, read N- to C-terminus: Probable phosphoglucosamine mutase (451 aa).

Catalysis depends on Ser96, which acts as the Phosphoserine intermediate. Mg(2+) is bound by residues Ser96, Asp233, Asp235, and Asp237. Ser96 bears the Phosphoserine mark.

Belongs to the phosphohexose mutase family. The cofactor is Mg(2+). In terms of processing, activated by phosphorylation.

The enzyme catalyses alpha-D-glucosamine 1-phosphate = D-glucosamine 6-phosphate. Catalyzes the conversion of glucosamine-6-phosphate to glucosamine-1-phosphate. This Pyrococcus abyssi (strain GE5 / Orsay) protein is Probable phosphoglucosamine mutase.